We begin with the raw amino-acid sequence, 275 residues long: 2,3,4,5-tetrahydropyridine-2,6-dicarboxylate N-succinyltransferase (275 aa).

It belongs to the transferase hexapeptide repeat family.

The protein localises to the cytoplasm. The catalysed reaction is (S)-2,3,4,5-tetrahydrodipicolinate + succinyl-CoA + H2O = (S)-2-succinylamino-6-oxoheptanedioate + CoA. The protein operates within amino-acid biosynthesis; L-lysine biosynthesis via DAP pathway; LL-2,6-diaminopimelate from (S)-tetrahydrodipicolinate (succinylase route): step 1/3. The polypeptide is 2,3,4,5-tetrahydropyridine-2,6-dicarboxylate N-succinyltransferase (Ralstonia pickettii (strain 12J)).